We begin with the raw amino-acid sequence, 217 residues long: MQTGLDFTLVEDLVAGVDEVGRGPLCGAVVTAAVILDPAKPILGLNDSKKLTEAKREKLFVEIQEKALCWFIARAEVEEIDQLNILHATMLAMKRAVEGLSITPKLALIDGNRCPQLSVPSAPVVKGDSKVPAIAAASILAKVSRDREMAALELIYPGYGIAGHKGYPTPVHLEALARLGPTPIHRRSFGPVRTAHEARAAIMLGGSIPLPVGLLQD.

Residues 12–201 (DLVAGVDEVG…VRTAHEARAA (190 aa)) form the RNase H type-2 domain. A divalent metal cation-binding residues include D18, E19, and D110.

This sequence belongs to the RNase HII family. Mn(2+) serves as cofactor. Requires Mg(2+) as cofactor.

The protein localises to the cytoplasm. It catalyses the reaction Endonucleolytic cleavage to 5'-phosphomonoester.. Endonuclease that specifically degrades the RNA of RNA-DNA hybrids. The protein is Ribonuclease HII of Pseudomonas syringae pv. tomato (strain ATCC BAA-871 / DC3000).